The following is a 249-amino-acid chain: Probable transcriptional regulatory protein Dtur_1615 (249 aa).

The protein belongs to the TACO1 family.

It localises to the cytoplasm. In Dictyoglomus turgidum (strain DSM 6724 / Z-1310), this protein is Probable transcriptional regulatory protein Dtur_1615.